The sequence spans 253 residues: 3-deoxy-manno-octulosonate cytidylyltransferase (253 aa).

This sequence belongs to the KdsB family.

It is found in the cytoplasm. It carries out the reaction 3-deoxy-alpha-D-manno-oct-2-ulosonate + CTP = CMP-3-deoxy-beta-D-manno-octulosonate + diphosphate. It functions in the pathway nucleotide-sugar biosynthesis; CMP-3-deoxy-D-manno-octulosonate biosynthesis; CMP-3-deoxy-D-manno-octulosonate from 3-deoxy-D-manno-octulosonate and CTP: step 1/1. The protein operates within bacterial outer membrane biogenesis; lipopolysaccharide biosynthesis. Functionally, activates KDO (a required 8-carbon sugar) for incorporation into bacterial lipopolysaccharide in Gram-negative bacteria. The sequence is that of 3-deoxy-manno-octulosonate cytidylyltransferase from Neisseria meningitidis serogroup B (strain ATCC BAA-335 / MC58).